The chain runs to 1269 residues: DNA-directed RNA polymerase subunit beta'' (1269 aa).

Zn(2+) contacts are provided by Cys-226, Cys-301, Cys-308, and Cys-311.

Belongs to the RNA polymerase beta' chain family. RpoC2 subfamily. In terms of assembly, in plastids the minimal PEP RNA polymerase catalytic core is composed of four subunits: alpha, beta, beta', and beta''. When a (nuclear-encoded) sigma factor is associated with the core the holoenzyme is formed, which can initiate transcription. Requires Zn(2+) as cofactor.

It localises to the plastid. Its subcellular location is the chloroplast. The catalysed reaction is RNA(n) + a ribonucleoside 5'-triphosphate = RNA(n+1) + diphosphate. DNA-dependent RNA polymerase catalyzes the transcription of DNA into RNA using the four ribonucleoside triphosphates as substrates. The protein is DNA-directed RNA polymerase subunit beta'' of Cyanidium caldarium (Red alga).